Here is a 510-residue protein sequence, read N- to C-terminus: Inositol-3-phosphate synthase 1 (510 aa).

Residues G70, G71, N72, N73, D143, I180, Q190, R193, T230, A231, N232, T233, G281, S282, D306, S309, N340, N341, D342, K355, G393, D394, D422, and S423 each contribute to the NAD(+) site.

This sequence belongs to the myo-inositol 1-phosphate synthase family. NAD(+) is required as a cofactor.

It localises to the cytoplasm. It is found in the cytosol. Its subcellular location is the nucleus. The enzyme catalyses D-glucose 6-phosphate = 1D-myo-inositol 3-phosphate. Its pathway is polyol metabolism; myo-inositol biosynthesis; myo-inositol from D-glucose 6-phosphate: step 1/2. Its function is as follows. Key enzyme in myo-inositol biosynthesis pathway that catalyzes the conversion of glucose 6-phosphate to 1-myo-inositol 1-phosphate in a NAD-dependent manner. May play a role in oxidative stress resistance and influences ascorbate levels. The protein is Inositol-3-phosphate synthase 1 of Populus euphratica (Euphrates poplar).